A 592-amino-acid polypeptide reads, in one-letter code: Aspartate--tRNA(Asp/Asn) ligase (592 aa).

L-aspartate is bound at residue Glu-175. Residues 199 to 202 (QQFK) are aspartate. Positions 221 and 451 each coordinate L-aspartate. ATP is bound at residue 221 to 223 (RDE). ATP is bound at residue Glu-485. Position 492 (Arg-492) interacts with L-aspartate. Residue 537–540 (GIDR) coordinates ATP.

The protein belongs to the class-II aminoacyl-tRNA synthetase family. Type 1 subfamily. In terms of assembly, homodimer.

The protein localises to the cytoplasm. The catalysed reaction is tRNA(Asx) + L-aspartate + ATP = L-aspartyl-tRNA(Asx) + AMP + diphosphate. Functionally, aspartyl-tRNA synthetase with relaxed tRNA specificity since it is able to aspartylate not only its cognate tRNA(Asp) but also tRNA(Asn). Reaction proceeds in two steps: L-aspartate is first activated by ATP to form Asp-AMP and then transferred to the acceptor end of tRNA(Asp/Asn). The chain is Aspartate--tRNA(Asp/Asn) ligase from Phenylobacterium zucineum (strain HLK1).